The following is a 506-amino-acid chain: 2-isopropylmalate synthase (506 aa).

The Pyruvate carboxyltransferase domain maps to 6-267 (IIVFDTTLRD…YTDIVTKEIY (262 aa)). Mn(2+) is bound by residues Asp15, His201, His203, and Asn237. The interval 391–506 (SIQTLSTSSC…LNSYLSMKNR (116 aa)) is regulatory domain.

Belongs to the alpha-IPM synthase/homocitrate synthase family. LeuA type 1 subfamily. Homodimer. Mn(2+) is required as a cofactor.

The protein localises to the cytoplasm. It catalyses the reaction 3-methyl-2-oxobutanoate + acetyl-CoA + H2O = (2S)-2-isopropylmalate + CoA + H(+). Its pathway is amino-acid biosynthesis; L-leucine biosynthesis; L-leucine from 3-methyl-2-oxobutanoate: step 1/4. Catalyzes the condensation of the acetyl group of acetyl-CoA with 3-methyl-2-oxobutanoate (2-ketoisovalerate) to form 3-carboxy-3-hydroxy-4-methylpentanoate (2-isopropylmalate). This chain is 2-isopropylmalate synthase, found in Campylobacter fetus subsp. fetus (strain 82-40).